Reading from the N-terminus, the 167-residue chain is SsrA-binding protein (167 aa).

Basic and acidic residues predominate over residues 139–158; sequence QNHDKRDAAKDRDWQRDKQR. The interval 139–167 is disordered; sequence QNHDKRDAAKDRDWQRDKQRVMRRHNRDA.

Belongs to the SmpB family.

The protein resides in the cytoplasm. Its function is as follows. Required for rescue of stalled ribosomes mediated by trans-translation. Binds to transfer-messenger RNA (tmRNA), required for stable association of tmRNA with ribosomes. tmRNA and SmpB together mimic tRNA shape, replacing the anticodon stem-loop with SmpB. tmRNA is encoded by the ssrA gene; the 2 termini fold to resemble tRNA(Ala) and it encodes a 'tag peptide', a short internal open reading frame. During trans-translation Ala-aminoacylated tmRNA acts like a tRNA, entering the A-site of stalled ribosomes, displacing the stalled mRNA. The ribosome then switches to translate the ORF on the tmRNA; the nascent peptide is terminated with the 'tag peptide' encoded by the tmRNA and targeted for degradation. The ribosome is freed to recommence translation, which seems to be the essential function of trans-translation. The chain is SsrA-binding protein from Xanthomonas euvesicatoria pv. vesicatoria (strain 85-10) (Xanthomonas campestris pv. vesicatoria).